A 309-amino-acid chain; its full sequence is 4-hydroxy-3-methylbut-2-enyl diphosphate reductase (309 aa).

A [4Fe-4S] cluster-binding site is contributed by Cys-12. 2 residues coordinate (2E)-4-hydroxy-3-methylbut-2-enyl diphosphate: His-41 and His-74. Dimethylallyl diphosphate contacts are provided by His-41 and His-74. The isopentenyl diphosphate site is built by His-41 and His-74. Residue Cys-96 coordinates [4Fe-4S] cluster. His-124 lines the (2E)-4-hydroxy-3-methylbut-2-enyl diphosphate pocket. A dimethylallyl diphosphate-binding site is contributed by His-124. Isopentenyl diphosphate is bound at residue His-124. Catalysis depends on Glu-126, which acts as the Proton donor. Residue Thr-167 participates in (2E)-4-hydroxy-3-methylbut-2-enyl diphosphate binding. Cys-197 lines the [4Fe-4S] cluster pocket. (2E)-4-hydroxy-3-methylbut-2-enyl diphosphate contacts are provided by Ser-225, Ser-226, Asn-227, and Ser-269. Dimethylallyl diphosphate-binding residues include Ser-225, Ser-226, Asn-227, and Ser-269. The isopentenyl diphosphate site is built by Ser-225, Ser-226, Asn-227, and Ser-269.

Belongs to the IspH family. It depends on [4Fe-4S] cluster as a cofactor.

It carries out the reaction isopentenyl diphosphate + 2 oxidized [2Fe-2S]-[ferredoxin] + H2O = (2E)-4-hydroxy-3-methylbut-2-enyl diphosphate + 2 reduced [2Fe-2S]-[ferredoxin] + 2 H(+). It catalyses the reaction dimethylallyl diphosphate + 2 oxidized [2Fe-2S]-[ferredoxin] + H2O = (2E)-4-hydroxy-3-methylbut-2-enyl diphosphate + 2 reduced [2Fe-2S]-[ferredoxin] + 2 H(+). It participates in isoprenoid biosynthesis; dimethylallyl diphosphate biosynthesis; dimethylallyl diphosphate from (2E)-4-hydroxy-3-methylbutenyl diphosphate: step 1/1. It functions in the pathway isoprenoid biosynthesis; isopentenyl diphosphate biosynthesis via DXP pathway; isopentenyl diphosphate from 1-deoxy-D-xylulose 5-phosphate: step 6/6. Functionally, catalyzes the conversion of 1-hydroxy-2-methyl-2-(E)-butenyl 4-diphosphate (HMBPP) into a mixture of isopentenyl diphosphate (IPP) and dimethylallyl diphosphate (DMAPP). Acts in the terminal step of the DOXP/MEP pathway for isoprenoid precursor biosynthesis. The sequence is that of 4-hydroxy-3-methylbut-2-enyl diphosphate reductase from Shewanella pealeana (strain ATCC 700345 / ANG-SQ1).